Reading from the N-terminus, the 106-residue chain is N(2)-fixation sustaining protein CowN (106 aa).

It belongs to the CowN family.

Functionally, is required to sustain N(2)-dependent growth in the presence of low levels of carbon monoxide (CO). Probably acts by protecting the N(2) fixation ability of the nitrogenase complex, which is inactivated in the presence of CO. In Denitrovibrio acetiphilus (strain DSM 12809 / NBRC 114555 / N2460), this protein is N(2)-fixation sustaining protein CowN.